A 77-amino-acid chain; its full sequence is Large ribosomal subunit protein bL28 (77 aa).

It belongs to the bacterial ribosomal protein bL28 family.

This is Large ribosomal subunit protein bL28 from Polaromonas sp. (strain JS666 / ATCC BAA-500).